The following is a 551-amino-acid chain: Palmdelphin (551 aa).

M1 is modified (N-acetylmethionine). A coiled-coil region spans residues Q12–I106. K125 participates in a covalent cross-link: Glycyl lysine isopeptide (Lys-Gly) (interchain with G-Cter in SUMO2). A Phosphoserine modification is found at S135. K178 is covalently cross-linked (Glycyl lysine isopeptide (Lys-Gly) (interchain with G-Cter in SUMO1); alternate). A Glycyl lysine isopeptide (Lys-Gly) (interchain with G-Cter in SUMO2); alternate cross-link involves residue K178. Positions E247 to E258 are enriched in basic and acidic residues. The tract at residues E247 to C266 is disordered. T270 is modified (phosphothreonine). Disordered regions lie at residues L294–E390 and A451–D533. A phosphoserine mark is found at S321 and S349. A compositionally biased stretch (polar residues) spans H341–E353. Basic and acidic residues predominate over residues S354–P365. 7 positions are modified to phosphoserine: S370, S375, S384, S385, S498, S515, and S520.

It belongs to the paralemmin family. As to quaternary structure, interacts with GLUL. Phosphorylated. In terms of tissue distribution, ubiquitous. Expressed at highest levels in the heart and lung.

It localises to the cytoplasm. Its subcellular location is the cell projection. The protein resides in the dendrite. The protein localises to the dendritic spine. This chain is Palmdelphin (Palmd), found in Mus musculus (Mouse).